We begin with the raw amino-acid sequence, 1117 residues long: Protein cup (1117 aa).

The interval 1–106 (MQMAEAEQEN…PPPPPPLPTS (106 aa)) is disordered. 2 stretches are compositionally biased toward pro residues: residues 54–64 (YPPPPPPPTPV) and 95–104 (CAPPPPPPLP). Residues serine 263 and serine 270 each carry the phosphoserine modification. Residues 270-326 (SPRKQVASKEAVPEQQSSQVQQKRPPSTGIHKPGSLRAPKAVRPTTAPVVSSKPVKS) are disordered. A compositionally biased stretch (polar residues) spans 283–294 (EQQSSQVQQKRP). A YXXXXLphi motif 1 motif is present at residues 327-333 (YTRSRLM). Serine 347 and serine 350 each carry phosphoserine. The YXXXXLphi motif 2 signature appears at 363-369 (ELEGRLR). Disordered regions lie at residues 493–528 (ISSQPQRRPNTPVMGMSINRSENDTLHSNESSEDLS), 596–618 (KEGNKNHGLGETERETSKQKMDH), 654–673 (TEHQQQKEEKRPGSGRSFQF), 679–728 (SQQN…SSSS), 984–1004 (GAKHQAQQQYLNRGQQRQARP), and 1016–1051 (ISGGGNNHASGYPMNGQPQKHHSNLRFGDNQNFQSF). Phosphothreonine is present on threonine 503. A phosphoserine mark is found at serine 509, serine 513, serine 520, serine 523, and serine 524. Low complexity-rich tracts occupy residues 679–712 (SQQNYESSSYVNHQQPPQTQPQQMQQQSNTNTNN) and 988–1001 (QAQQQYLNRGQQRQ).

Belongs to the 4E-T/EIF4E-T family. Component of the osk RNP complex, which is composed of at least exu, yps, aret/bruno, cup, and the mRNA of osk. Interacts with the decapping activators me31B and tral. Component of the nanos RNP complex, which is composed of at least smg, cup, tral, me31B, the CCR4-NOT complex members Rga/NOT2 and Caf1, and the mRNA of nanos (nos). Interacts with btz. Recruited to the 3'-UTR of nos and osk mRNAs by smg and btz, respectively. Forms a ribonucleoprotein complex (RNP) containing at least me31B, eIF4E1, cup, tral and pAbp; this interaction is required for the translational silencing of maternal mRNAs during the maternal-to-zygotic transition. No interaction was detected with pAbp in 1-5 hour embryos. Interacts with osk and vas. Interacts with Pop2, twin/CCR4, Rga, Not3 and Not1 which are all core components of the CCR4-NOT deadenylase complex; interaction with the complex is required for cup deadenylation activity. Interacts with nanos. Interacts with smg. Interacts (via YXXXXLphi motifs) with eIF4E1; the interaction promotes retention of cup in the cytoplasm. Interacts with orb; the interaction represses the orb positive autoregulatory loop. Interacts with Nup154. Predominantly expressed in ovaries and in 0-2 hours old embryos. Weakly expressed in testis. Expressed in young embryos through stage 9, then it decreases throughout the rest of embryogenesis. In ovaries, it is expressed in germ cells throughout pre-vitellogenic development, but is not expressed in the somatic follicle cells. In germarial cysts, the protein (and not the transcripts) is transported selectively into the oocyte.

The protein localises to the cytoplasm. Its subcellular location is the nucleus. It is found in the cytoplasmic ribonucleoprotein granule. In terms of biological role, adapter protein that plays a central role in localization of transcripts in the oocyte and in young embryos. Maintains RNA targets in a repressed state by promoting their deadenylation and protects deadenylated mRNAs from further degradation. Binds to and recruits eIF-4E to the 3'-UTR of some mRNA targets which prevents interaction between eIF4E1 and eIF4G. This may contribute to translational repression but does not appear to be necessary for it to occur. Can promote translational repression independently of deadenylation and eIF4E1 binding. Required for correct localization of eIF4E1 in the developing oocyte. Required for translational repression of oskar (osk) mRNA. Also required for the translational repression of nanos (nos) mRNA. Promotes the accumulation of the germ plasm components osk, vas and stau at the posterior pole of the oocyte and is required for germ cell development. Represses orb positive autoregulatory activity which prevents premature activation of orb and ensures its accumulation specifically in the developing oocyte. In 0-1 hour embryos, forms a complex with me31B, cup, tral and pAbp which binds to various mRNAs including maternal mRNAs, and down-regulates their expression during the maternal-to-zygotic transition. In Drosophila melanogaster (Fruit fly), this protein is Protein cup (cup).